The following is a 172-amino-acid chain: MARTMSKTAPKTSAANGSLAPWLGVALIVILFDQLTKIAVQKVFAYGVAHEVTSFFNLILVYNRGAAFSFLAMAGGWQRWAFTALGVVAALVICYLLKRHGGQKMFCTALALILGGALGNVIDRLAYGHVIDFLDFHLRTWHWPAFNLADSAITVGAVLLVLDELRRVRGSR.

4 helical membrane-spanning segments follow: residues 12 to 32, 43 to 63, 77 to 97, and 102 to 122; these read TSAA…VILF, VFAY…LVYN, WQRW…CYLL, and GQKM…GNVI. Residues aspartate 132 and aspartate 150 contribute to the active site. A helical transmembrane segment spans residues 142-162; the sequence is HWPAFNLADSAITVGAVLLVL.

This sequence belongs to the peptidase A8 family.

The protein localises to the cell inner membrane. The enzyme catalyses Release of signal peptides from bacterial membrane prolipoproteins. Hydrolyzes -Xaa-Yaa-Zaa-|-(S,diacylglyceryl)Cys-, in which Xaa is hydrophobic (preferably Leu), and Yaa (Ala or Ser) and Zaa (Gly or Ala) have small, neutral side chains.. Its pathway is protein modification; lipoprotein biosynthesis (signal peptide cleavage). In terms of biological role, this protein specifically catalyzes the removal of signal peptides from prolipoproteins. The sequence is that of Lipoprotein signal peptidase from Paraburkholderia phytofirmans (strain DSM 17436 / LMG 22146 / PsJN) (Burkholderia phytofirmans).